The primary structure comprises 217 residues: Translation initiation factor 6 (217 aa).

Belongs to the eIF-6 family.

Its function is as follows. Binds to the 50S ribosomal subunit and prevents its association with the 30S ribosomal subunit to form the 70S initiation complex. The polypeptide is Translation initiation factor 6 (Picrophilus torridus (strain ATCC 700027 / DSM 9790 / JCM 10055 / NBRC 100828 / KAW 2/3)).